Consider the following 169-residue polypeptide: MKPKAVLIGPPGAGKSTIGRRLAQALELELVDTDAEIERTTGRTIPEIFTHDGEPRFREIEESVVRDALQATDGIVSLGGGAILSDRTRELLQGHTVIYLEISVAEGLRRTGANNHRPLLAGGDPKVKYQELMRRRRPLYRRSATIRIRTDGRSPARVVGQLVSKLQDK.

12-17 is a binding site for ATP; that stretch reads GAGKST. S16 contacts Mg(2+). D34, R58, and G80 together coordinate substrate. R117 is an ATP binding site. R136 contacts substrate.

Belongs to the shikimate kinase family. In terms of assembly, monomer. Mg(2+) serves as cofactor.

Its subcellular location is the cytoplasm. It carries out the reaction shikimate + ATP = 3-phosphoshikimate + ADP + H(+). Its pathway is metabolic intermediate biosynthesis; chorismate biosynthesis; chorismate from D-erythrose 4-phosphate and phosphoenolpyruvate: step 5/7. Functionally, catalyzes the specific phosphorylation of the 3-hydroxyl group of shikimic acid using ATP as a cosubstrate. The chain is Shikimate kinase from Rhodococcus erythropolis (strain PR4 / NBRC 100887).